A 281-amino-acid polypeptide reads, in one-letter code: 3-methyl-2-oxobutanoate hydroxymethyltransferase (281 aa).

The Mg(2+) site is built by Asp-44 and Asp-83. Residues 44-45 (DS), Asp-83, and Lys-112 each bind 3-methyl-2-oxobutanoate. Glu-114 serves as a coordination point for Mg(2+). Glu-180 acts as the Proton acceptor in catalysis. Positions 251–281 (RNGTFPGPEHSSRMDPAELAAALGSQDQATE) are disordered.

The protein belongs to the PanB family. As to quaternary structure, homodecamer; pentamer of dimers. Mg(2+) serves as cofactor.

The protein localises to the cytoplasm. It catalyses the reaction 3-methyl-2-oxobutanoate + (6R)-5,10-methylene-5,6,7,8-tetrahydrofolate + H2O = 2-dehydropantoate + (6S)-5,6,7,8-tetrahydrofolate. It functions in the pathway cofactor biosynthesis; (R)-pantothenate biosynthesis; (R)-pantoate from 3-methyl-2-oxobutanoate: step 1/2. In terms of biological role, catalyzes the reversible reaction in which hydroxymethyl group from 5,10-methylenetetrahydrofolate is transferred onto alpha-ketoisovalerate to form ketopantoate. The sequence is that of 3-methyl-2-oxobutanoate hydroxymethyltransferase from Chloroflexus aurantiacus (strain ATCC 29364 / DSM 637 / Y-400-fl).